We begin with the raw amino-acid sequence, 487 residues long: Acetylcholine receptor subunit beta-type acr-3 (487 aa).

Positions 1–20 are cleaved as a signal peptide; sequence MQKIWLFSIITIFLITELQC. Over 21–231 the chain is Extracellular; sequence YPNSAEERLL…KIRRKALFYT (211 aa). Asn-46 is a glycosylation site (N-linked (GlcNAc...) asparagine). A disulfide bond links Cys-151 and Cys-165. 3 helical membrane passes run 232–252, 259–279, and 294–314; these read VILI…FYLP, ITLA…VSKI, and LLMT…IINV. Residues 315–439 lie on the Cytoplasmic side of the membrane; the sequence is YFRGPATHIM…WKFVSVVIDR (125 aa). Positions 380-400 are disordered; that stretch reads ISEQPKQTSRKDGSSSEEKLS. A helical transmembrane segment spans residues 440–460; the sequence is LLLYLFFAVTTGGTVGILLSA.

It belongs to the ligand-gated ion channel (TC 1.A.9) family. Acetylcholine receptor (TC 1.A.9.1) subfamily. In terms of assembly, component of nicotinic acetylcholine receptor. In cholinergic motoneurons, composed of 2 non-alpha subunits acr-2 and acr-3, and 3 alpha subunits unc-38, unc-63 and acr-12.

The protein resides in the postsynaptic cell membrane. It localises to the cell membrane. In terms of biological role, non-alpha subunit of nicotinic acetylcholine receptor (nAChR). Probably acts in cholinergic motoneurons to regulate presynaptic neurotransmitter release, thereby ensuring normal level of excitation of cholinergic motoneurons during locomotion. This chain is Acetylcholine receptor subunit beta-type acr-3 (acr-3), found in Caenorhabditis elegans.